Consider the following 346-residue polypeptide: Methylthioribose-1-phosphate isomerase (346 aa).

Residues R54–A56, R91, and Q192 contribute to the substrate site. D233 functions as the Proton donor in the catalytic mechanism. N243–K244 serves as a coordination point for substrate.

It belongs to the eIF-2B alpha/beta/delta subunits family. MtnA subfamily.

It carries out the reaction 5-(methylsulfanyl)-alpha-D-ribose 1-phosphate = 5-(methylsulfanyl)-D-ribulose 1-phosphate. It functions in the pathway amino-acid biosynthesis; L-methionine biosynthesis via salvage pathway; L-methionine from S-methyl-5-thio-alpha-D-ribose 1-phosphate: step 1/6. Its function is as follows. Catalyzes the interconversion of methylthioribose-1-phosphate (MTR-1-P) into methylthioribulose-1-phosphate (MTRu-1-P). The chain is Methylthioribose-1-phosphate isomerase from Yersinia pseudotuberculosis serotype O:1b (strain IP 31758).